A 465-amino-acid polypeptide reads, in one-letter code: tRNA modification GTPase MnmE (465 aa).

Positions 24, 84, and 127 each coordinate (6S)-5-formyl-5,6,7,8-tetrahydrofolate. Residues 223–383 (GLNIVLAGQP…LRGELLRLIG (161 aa)) form the TrmE-type G domain. K(+) is bound at residue N233. Residues 233-238 (NVGKSS), 252-258 (TAIAGTT), and 277-280 (DTAG) contribute to the GTP site. S237 serves as a coordination point for Mg(2+). T252, I254, and T257 together coordinate K(+). A Mg(2+)-binding site is contributed by T258. K465 is a binding site for (6S)-5-formyl-5,6,7,8-tetrahydrofolate.

Belongs to the TRAFAC class TrmE-Era-EngA-EngB-Septin-like GTPase superfamily. TrmE GTPase family. Homodimer. Heterotetramer of two MnmE and two MnmG subunits. K(+) is required as a cofactor.

Its subcellular location is the cytoplasm. Functionally, exhibits a very high intrinsic GTPase hydrolysis rate. Involved in the addition of a carboxymethylaminomethyl (cmnm) group at the wobble position (U34) of certain tRNAs, forming tRNA-cmnm(5)s(2)U34. The chain is tRNA modification GTPase MnmE from Janthinobacterium sp. (strain Marseille) (Minibacterium massiliensis).